Here is a 514-residue protein sequence, read N- to C-terminus: Bifunctional lysine-specific demethylase and histidyl-hydroxylase NO66 (514 aa).

The segment at 1–53 is disordered; sequence MKRGLEEEIEEMSEEEVGVNNNNNGKKKKKKVVKKSKPVPLTKSVPQVSSQPL. Acidic residues predominate over residues 7–17; it reads EEIEEMSEEEV. A compositionally biased stretch (basic residues) spans 25-37; that stretch reads GKKKKKKVVKKSK. Over residues 44-53 the composition is skewed to polar residues; that stretch reads SVPQVSSQPL. The 148-residue stretch at 180–327 folds into the JmjC domain; it reads CSVRLLNPQT…IGKVLNRALE (148 aa). Fe cation is bound by residues His226, Asp228, and His291.

It belongs to the ROX family. NO66 subfamily. Requires Fe(2+) as cofactor.

The protein localises to the nucleus. It carries out the reaction N(6),N(6)-dimethyl-L-lysyl(36)-[histone H3] + 2 2-oxoglutarate + 2 O2 = L-lysyl(36)-[histone H3] + 2 formaldehyde + 2 succinate + 2 CO2. Its function is as follows. Oxygenase that can act as both a histone lysine demethylase and a ribosomal histidine hydroxylase. Specifically demethylates 'Lys-4' (H3K4me) and 'Lys-36' (H3K36me) of histone H3, thereby playing a central role in histone code. The chain is Bifunctional lysine-specific demethylase and histidyl-hydroxylase NO66 (jcdg) from Dictyostelium discoideum (Social amoeba).